The following is a 519-amino-acid chain: Aldehyde dehydrogenase X, mitochondrial (519 aa).

A mitochondrion-targeting transit peptide spans Met1–Thr19. Lys53 is modified (N6-acetyllysine). The residue at position 54 (Lys54) is an N6-acetyllysine; alternate. Lys54 carries the post-translational modification N6-succinyllysine; alternate. Residue Gly264–Gly269 coordinates NAD(+). The active-site Proton acceptor is Glu287. Catalysis depends on Cys321, which acts as the Nucleophile. N6-acetyllysine; alternate is present on residues Lys366, Lys385, Lys401, and Lys428. An N6-succinyllysine; alternate mark is found at Lys366, Lys385, Lys401, and Lys428. The residue at position 431 (Lys431) is an N6-acetyllysine.

The protein belongs to the aldehyde dehydrogenase family. In terms of assembly, homotetramer.

Its subcellular location is the mitochondrion matrix. The enzyme catalyses an aldehyde + NAD(+) + H2O = a carboxylate + NADH + 2 H(+). It functions in the pathway alcohol metabolism; ethanol degradation; acetate from ethanol: step 2/2. Its function is as follows. ALDHs play a major role in the detoxification of alcohol-derived acetaldehyde. They are involved in the metabolism of corticosteroids, biogenic amines, neurotransmitters, and lipid peroxidation. The polypeptide is Aldehyde dehydrogenase X, mitochondrial (Aldh1b1) (Rattus norvegicus (Rat)).